The chain runs to 141 residues: Putative pre-16S rRNA nuclease (141 aa).

The protein belongs to the YqgF nuclease family.

Its subcellular location is the cytoplasm. Could be a nuclease involved in processing of the 5'-end of pre-16S rRNA. This chain is Putative pre-16S rRNA nuclease, found in Aliivibrio fischeri (strain MJ11) (Vibrio fischeri).